Consider the following 777-residue polypeptide: Serine/threonine-protein kinase PLK4 (777 aa).

One can recognise a Protein kinase domain in the interval 14–268; the sequence is YEVQHLLGKG…LEQVLRHPFL (255 aa). Residues 20-28 and K43 each bind ATP; that span reads LGKGGFASV. D139 serves as the catalytic Proton acceptor. Residues 371–381 show a composition bias toward polar residues; it reads TNNLAPFTSDS. Positions 371 to 390 are disordered; that stretch reads TNNLAPFTSDSDMIPSPVGE. Residues 390–507 form the Cryptic POLO box 1 (CPB1) domain; the sequence is EKRLLMPPLE…ARFVGLVKSK (118 aa). In terms of domain architecture, Cryptic POLO box 2 (CPB2) spans 508–611; it reads TPKITFFSSL…GRRPAADMHA (104 aa). The 80-residue stretch at 669 to 748 folds into the POLO box domain; the sequence is PIKRITVPEI…MPQLQMKLKC (80 aa).

It belongs to the protein kinase superfamily. Ser/Thr protein kinase family. CDC5/Polo subfamily. As to quaternary structure, homodimer. Ubiquitinated by the SCF(Slimb) ubiquitin ligase complex; leading to its degradation by the proteasome during interphase and regulating centriole number and ensuring the block to centriole reduplication.

Its subcellular location is the cytoplasm. The protein resides in the cytoskeleton. It localises to the microtubule organizing center. It is found in the centrosome. The protein localises to the centriole. It catalyses the reaction L-seryl-[protein] + ATP = O-phospho-L-seryl-[protein] + ADP + H(+). The enzyme catalyses L-threonyl-[protein] + ATP = O-phospho-L-threonyl-[protein] + ADP + H(+). In terms of biological role, serine/threonine-protein kinase that plays a central role in centriole duplication. Able to trigger procentriole formation on the surface of the mother centriole cylinder, using mother centriole as a platform, leading to the recruitment of centriole biogenesis proteins such as sas-6. When overexpressed, it is able to induce centrosome amplification through the simultaneous generation of multiple procentrioles adjoining each parental centriole during S phase. Centrosome amplification following overexpression can initiate tumorigenesis, highlighting the importance of centrosome regulation in cancers. This Drosophila persimilis (Fruit fly) protein is Serine/threonine-protein kinase PLK4 (SAK).